Reading from the N-terminus, the 353-residue chain is Protein CEPU-1 (353 aa).

Positions Met-1 to Pro-28 are cleaved as a signal peptide. Ig-like C2-type domains are found at residues Pro-37 to Ser-124, Pro-134 to Thr-216, and Pro-220 to Thr-314. N-linked (GlcNAc...) asparagine glycans are attached at residues Asn-42, Asn-68, and Asn-150. An intrachain disulfide couples Cys-55 to Cys-113. Intrachain disulfides connect Cys-155/Cys-199 and Cys-241/Cys-293. Asn-282, Asn-290, and Asn-303 each carry an N-linked (GlcNAc...) asparagine glycan. Residue Ser-330 is the site of GPI-anchor amidated serine attachment. The propeptide at Gly-331 to Phe-353 is removed in mature form.

This sequence belongs to the immunoglobulin superfamily. IgLON family. As to quaternary structure, interacts with NEGR1. In terms of tissue distribution, found on the dendrites, somata and axons of developing Purkinje cells. Undetectable on other neurons like Golgi or granule cells.

The protein resides in the cell membrane. Functionally, it may be a cellular address molecule specific to Purkinje cells. It may represent a receptor or a subunit of a receptor complex. This is Protein CEPU-1 from Gallus gallus (Chicken).